Consider the following 122-residue polypeptide: Large ribosomal subunit protein uL18 (122 aa).

It belongs to the universal ribosomal protein uL18 family. In terms of assembly, part of the 50S ribosomal subunit; part of the 5S rRNA/L5/L18/L25 subcomplex. Contacts the 5S and 23S rRNAs.

This is one of the proteins that bind and probably mediate the attachment of the 5S RNA into the large ribosomal subunit, where it forms part of the central protuberance. This is Large ribosomal subunit protein uL18 from Prochlorococcus marinus (strain AS9601).